Here is a 351-residue protein sequence, read N- to C-terminus: Fe(3+) ions import ATP-binding protein FbpC (351 aa).

Residues 7–241 enclose the ABC transporter domain; sequence LTVKNLNKFF…PNHLETAKFM (235 aa). ATP is bound at residue 39-46; that stretch reads GASGCGKT.

This sequence belongs to the ABC transporter superfamily. Fe(3+) ion importer (TC 3.A.1.10) family. The complex is composed of two ATP-binding proteins (FbpC), two transmembrane proteins (FbpB) and a solute-binding protein (FbpA).

It is found in the cell inner membrane. It carries out the reaction Fe(3+)(out) + ATP + H2O = Fe(3+)(in) + ADP + phosphate + H(+). Functionally, part of the ABC transporter complex FbpABC involved in Fe(3+) ions import. Responsible for energy coupling to the transport system. The sequence is that of Fe(3+) ions import ATP-binding protein FbpC from Haemophilus influenzae (strain 86-028NP).